The chain runs to 514 residues: Beta-galactoside alpha-2,6-sialyltransferase 2 (514 aa).

Residues 1–10 (MKSSLKQWRR) are Cytoplasmic-facing. The helical; Signal-anchor for type II membrane protein transmembrane segment at 11-31 (LALGLILVWALLFLALLSYFM) threads the bilayer. Residues 32-514 (ESRVDDPHAA…PGFNKVHCEP (483 aa)) are Lumenal-facing. The segment covering 70 to 92 (ATSSAPSTSSNTQQEQSQEENPS) has biased composition (low complexity). A disordered region spans residues 70-183 (ATSSAPSTSS…TKRVARHGSS (114 aa)). The segment covering 119-132 (FGTQDVGSRSTGVS) has biased composition (polar residues). Acidic residues predominate over residues 145–166 (PQEDEDEEEEVIGGEEEDEEGG). 3 cysteine pairs are disulfide-bonded: C246-C512, C289-C441, and C459-C470. N330, N350, and N357 each carry an N-linked (GlcNAc...) asparagine glycan.

Belongs to the glycosyltransferase 29 family.

The protein resides in the golgi apparatus. It localises to the golgi stack membrane. It carries out the reaction a beta-D-galactoside + CMP-N-acetyl-beta-neuraminate = an N-acetyl-alpha-neuraminyl-(2-&gt;6)-beta-D-galactosyl derivative + CMP + H(+). Its function is as follows. Transfers sialic acid from the donor of substrate CMP-sialic acid to galactose containing acceptor substrates. This Danio rerio (Zebrafish) protein is Beta-galactoside alpha-2,6-sialyltransferase 2 (st6gal2).